The chain runs to 252 residues: Phosphoglycolate phosphatase (252 aa).

Asp-13 acts as the Nucleophile in catalysis. The Mg(2+) site is built by Asp-13, Asp-15, and Asp-192.

Belongs to the HAD-like hydrolase superfamily. CbbY/CbbZ/Gph/YieH family. In terms of assembly, monomer. Requires Mg(2+) as cofactor. It depends on chloride as a cofactor.

It carries out the reaction 2-phosphoglycolate + H2O = glycolate + phosphate. It participates in organic acid metabolism; glycolate biosynthesis; glycolate from 2-phosphoglycolate: step 1/1. Its function is as follows. Specifically catalyzes the dephosphorylation of 2-phosphoglycolate. Is involved in the dissimilation of the intracellular 2-phosphoglycolate formed during the DNA repair of 3'-phosphoglycolate ends, a major class of DNA lesions induced by oxidative stress. This is Phosphoglycolate phosphatase from Shigella flexneri.